A 918-amino-acid polypeptide reads, in one-letter code: Translation initiation factor IF-2 (918 aa).

Residues 39-321 (DDASEKHLRN…KRDGRMKETT (283 aa)) are disordered. Residues 95-146 (KSSNNESTTRNNNNNKNGNQNRNNTNGRPNNNQNRPNNNRNQNNNRNGNRPN) show a composition bias toward low complexity. Basic and acidic residues predominate over residues 148–158 (PKRDEKQDRIR). Residues 159–174 (ASVAEAARMAAQANRE) are compositionally biased toward low complexity. Residues 180–190 (PQANRQRTNSA) are compositionally biased toward polar residues. Low complexity-rich tracts occupy residues 201–231 (NNQN…NNRN), 237–267 (SRPN…TANN), and 278–296 (GRNN…QNRP). Residues 302–313 (RKNKKRNRKAKR) show a composition bias toward basic residues. The region spanning 419 to 588 (SRPPVVTIMG…LLQAEVLELK (170 aa)) is the tr-type G domain. Residues 428 to 435 (GHVDHGKT) are G1. 428-435 (GHVDHGKT) contributes to the GTP binding site. Positions 453–457 (GITQG) are G2. The tract at residues 474-477 (DTPG) is G3. GTP is bound by residues 474–478 (DTPGH) and 528–531 (NKID). The segment at 528–531 (NKID) is G4. Residues 564–566 (SAK) are G5.

The protein belongs to the TRAFAC class translation factor GTPase superfamily. Classic translation factor GTPase family. IF-2 subfamily.

It is found in the cytoplasm. In terms of biological role, one of the essential components for the initiation of protein synthesis. Protects formylmethionyl-tRNA from spontaneous hydrolysis and promotes its binding to the 30S ribosomal subunits. Also involved in the hydrolysis of GTP during the formation of the 70S ribosomal complex. The sequence is that of Translation initiation factor IF-2 from Pediococcus pentosaceus (strain ATCC 25745 / CCUG 21536 / LMG 10740 / 183-1w).